The primary structure comprises 250 residues: 5'-nucleotidase SurE (250 aa).

Residues Asp-8, Asp-9, Ser-40, and Asn-94 each contribute to the a divalent metal cation site.

It belongs to the SurE nucleotidase family. A divalent metal cation is required as a cofactor.

The protein resides in the cytoplasm. The catalysed reaction is a ribonucleoside 5'-phosphate + H2O = a ribonucleoside + phosphate. In terms of biological role, nucleotidase that shows phosphatase activity on nucleoside 5'-monophosphates. This Wolbachia pipientis wMel protein is 5'-nucleotidase SurE.